A 158-amino-acid polypeptide reads, in one-letter code: Developmental pluripotency-associated protein 3 (158 aa).

Disordered stretches follow at residues 1-38 and 54-78; these read MDEP…EILQ and SAKP…VENR. The span at 26 to 35 shows a compositional bias: acidic residues; it reads DEGDSPDDSE. Residues 58-68 are compositionally biased toward basic residues; it reads TKYHRRQRVRL.

The protein resides in the nucleus. The protein localises to the cytoplasm. In terms of biological role, primordial germ cell (PGCs)-specific protein involved in epigenetic chromatin reprogramming in the zygote following fertilization. In zygotes, DNA demethylation occurs selectively in the paternal pronucleus before the first cell division, while the adjacent maternal pronucleus and certain paternally-imprinted loci are protected from this process. Participates in protection of DNA methylation in the maternal pronucleus by preventing conversion of 5mC to 5hmC: specifically recognizes and binds histone H3 dimethylated at 'Lys-9' (H3K9me2) on maternal genome, and protects maternal genome from TET3-mediated conversion to 5hmC and subsequent DNA demethylation. Does not bind paternal chromatin, which is mainly packed into protamine and does not contain much H3K9me2 mark. Also protects imprinted loci that are marked with H3K9me2 in mature sperm from DNA demethylation in early embryogenesis. May be important for the totipotent/pluripotent states continuing through preimplantation development. Also involved in chromatin condensation in oocytogenesis. In Rattus norvegicus (Rat), this protein is Developmental pluripotency-associated protein 3 (Dppa3).